The following is a 4265-amino-acid chain: Dynein axonemal heavy chain 1 (4265 aa).

A disordered region spans residues 1 to 88; that stretch reads MEQPNSKGYS…KSPLTGTDKK (88 aa). Positions 1–1542 are stem; the sequence is MEQPNSKGYS…YIRAVNAEFI (1542 aa). Residues 60–69 show a composition bias toward pro residues; that stretch reads PHLPLPPAPP. 4 AAA regions span residues 1543-1764, 1824-2057, 2189-2449, and 2547-2799; these read YGYE…VISA, EAIR…SSVK, TMVP…VFQG, and DYNQ…LTRH. The GPAGTGKT motif motif lies at 1581–1588; that stretch reads GPAGTGKT. 1581–1588 provides a ligand contact to ATP; sequence GPAGTGKT. The short motif at 1631 to 1637 is the CFDEFNR motif element; sequence CFDEFNR. ATP contacts are provided by residues 1862–1869, 2227–2234, and 2586–2593; these read GPTGSGKS, GPTGTGKT, and GVGGSGRS. Positions 2814–3112 are stalk; sequence FSILIGQKKL…EELELKCEQC (299 aa). Positions 3074 to 3122 form a coiled coil; sequence LDEAKQRLREVEDGIATMQAKYRECITKKEELELKCEQCEQRLGRAGKL. 2 AAA regions span residues 3197–3427 and 3640–3859; these read LGNP…EIQA and MQDF…QLKM.

Belongs to the dynein heavy chain family. Consists of at least two heavy chains and a number of intermediate and light chains. In terms of tissue distribution, expressed primarily in trachea and testis, 2 tissues containing axonemal structures. Also expressed in brain.

It is found in the cytoplasm. Its subcellular location is the cytoskeleton. The protein resides in the cilium axoneme. The protein localises to the cell projection. It localises to the cilium. It is found in the flagellum. Functionally, force generating protein of cilia required for sperm flagellum motility. Produces force towards the minus ends of microtubules. Dynein has ATPase activity; the force-producing power stroke is thought to occur on release of ADP. Required in spermatozoa for the formation of the inner dynein arms and biogenesis of the axoneme. This chain is Dynein axonemal heavy chain 1, found in Homo sapiens (Human).